The following is a 1364-amino-acid chain: Condensin complex subunit 1 (1364 aa).

The tract at residues Met1 to Leu588 is interaction with XCAP-E and XCAP-C. The span at Asp567–Asp577 shows a compositional bias: basic and acidic residues. 2 disordered regions span residues Asp567–Ser596 and Leu1273–Lys1364. The span at Ala579–Ser596 shows a compositional bias: polar residues. Thr1314 is subject to Phosphothreonine; by CDK1. The Bipartite nuclear localization signal motif lies at Pro1317–Lys1326. Over residues Ser1333–Glu1345 the composition is skewed to acidic residues. A phosphothreonine; by CDK1 mark is found at Thr1348 and Thr1353.

It belongs to the CND1 (condensin subunit 1) family. Component of the condensin complex, which contains the XCAP-E/SMC2 and XCAP-C/SMC4 heterodimer, and three non SMC subunits that probably regulate the complex: XCAP-H/NCAPH, XCAP-D2/NCAPD2 and XCAP-G/NCAPG. Post-translationally, phosphorylated by CDK1. Its phosphorylation, as well as that of XCAP-H and XCAP-G subunits, activates the condensin complex and is required for chromosome condensation.

The protein resides in the nucleus. It localises to the cytoplasm. It is found in the chromosome. Regulatory subunit of the condensin complex, a complex required for conversion of interphase chromatin into mitotic-like condense chromosomes. The condensin complex probably introduces positive supercoils into relaxed DNA in the presence of type I topoisomerases and converts nicked DNA into positive knotted forms in the presence of type II topoisomerases. May target the condensin complex to DNA via its C-terminal domain. The protein is Condensin complex subunit 1 (ncapd2) of Xenopus laevis (African clawed frog).